We begin with the raw amino-acid sequence, 111 residues long: uncharacterized protein (111 aa).

A helical membrane pass occupies residues 27–47 (HLFHFPSISFFFFFFFFFFSF).

Its subcellular location is the membrane. This is an uncharacterized protein from Saccharomyces cerevisiae (strain ATCC 204508 / S288c) (Baker's yeast).